The primary structure comprises 536 residues: MLKGRIALNILQSQKPIVFSASQQRWQTNVPTAEIRNDPEWLQAKPFEEIPKANILSLFAKSALPGGKYKNLEMMEMIDALRQDYGNIIFLPGMMGRDGLVMTHNPKDFEVVFRNEGVWPFRPGSDILRYHRTVYRKDFFDGVQGIIPSQGKSWGDFRSIVNPVLMQPKNVRLYFKKMSQVNQEFVELIKEIRDASTQEVPGNFLETINRWTLESVSVVALDKQLGLLRESGKNSEATKLFKYLDEFFLHSADLEMKPSLWRYFKTPLLKKMLRTMDSVQEVTLKYVDEAIERLEKEAKEGVVRPEHEQSVLEKLLKVDKKVATVMAMDMLMAGVDTTSSTFTALLLCLAKNPEKQARLREEVMKVLPNKDSEFTEASMKNVPYLRACIKESQRVYPLVIGNARGLTRDSVISGYRVPAGTIVSMIPINSLYSEEYFPKPTEFLPERWLRNASDSAGKCPANDLKTKNPFVFLPFGFGPRMCVGKRIVEMELELGTARLIRNFNVEFNHSTKNAFRSALINLPNIPLKFKFTDVPN.

Cys-482 provides a ligand contact to heme.

It belongs to the cytochrome P450 family. Heme serves as cofactor.

It is found in the mitochondrion membrane. This chain is Probable cytochrome P450 12a5, mitochondrial (Cyp12a5), found in Drosophila melanogaster (Fruit fly).